The sequence spans 537 residues: Synaptotagmin-C (537 aa).

The Vesicular segment spans residues 1–52 (MSGDGEDELCRNALALVNELCFSVRGNHNNEKCIEFSYLLRDRDRTRHIETD). A helical transmembrane segment spans residues 53-78 (ISVSLLSVIVTFCGIVLLGVSLFVSW). The Cytoplasmic segment spans residues 79–537 (KLCWIPWRDK…TIVVESPHSV (459 aa)). Disordered stretches follow at residues 92–111 (PQRRDSQHHPHQHLHHHHSH) and 142–200 (IKLS…EFGT). The segment covering 100–110 (HPHQHLHHHHS) has biased composition (basic residues). Positions 143 to 174 (KLSQTSPDIPVDTSSGSKENNIPNAHSQQQVS) are enriched in polar residues. The segment at 228–477 (EAKKHQKVNC…VIGMCRVGNA (250 aa)) is phospholipid binding. C2 domains are found at residues 236–357 (NCGR…TIWR) and 368–501 (DLGE…EQWH). 11 residues coordinate Ca(2+): D267, D273, D325, F326, D327, S330, D333, D399, D405, D459, and D461.

It belongs to the synaptotagmin family. In terms of assembly, homodimer or homotrimer (possible). It depends on Ca(2+) as a cofactor.

The protein resides in the cytoplasmic vesicle. It is found in the secretory vesicle. The protein localises to the synaptic vesicle membrane. It localises to the synapse. Functionally, may have a regulatory role in the membrane interactions during trafficking of synaptic vesicles at the active zone of the synapse. It binds acidic phospholipids with a specificity that requires the presence of both an acidic head group and a diacyl backbone. This Diplobatis ommata (Ocellated electric ray) protein is Synaptotagmin-C (P65-C).